The primary structure comprises 160 residues: Large ribosomal subunit protein uL30m (160 aa).

Residues 1-34 (MAGVLRSVFQRPPGRLQTVKKGAESLIGTEWIRH) constitute a mitochondrion transit peptide. Residues 45 to 64 (VFQPRPEDHEKYGGDPQNPH) form a disordered region.

The protein belongs to the universal ribosomal protein uL30 family. As to quaternary structure, component of the mitochondrial ribosome large subunit (39S) which comprises a 16S rRNA and about 50 distinct proteins.

It is found in the mitochondrion. This is Large ribosomal subunit protein uL30m (Mrpl30) from Rattus norvegicus (Rat).